A 255-amino-acid polypeptide reads, in one-letter code: MLDVEGLHLKRGSSEVLSDIRLQLRPGQILGVLGPNGAGKSSLLGALCGELSPSAGQVRLDGRDLHAWPGQERARRLAVLPQASSLGFAFSVEEVVGLGRLPHASGRQRDREIVEAALAAADAGHLASRSYLALSGGERQRVHLARVLAQLWPGEAGTTLLLDEPTSALDPLHQHTTLQAVRSFADRGAAVLVILHDLNLAARYCDHILLLEHGRSHALDTPQRVLTPAALNAVFGIDVLVQPHPERGHPLIITR.

Positions L2 to D238 constitute an ABC transporter domain. An ATP-binding site is contributed by G34–S41.

This sequence belongs to the ABC transporter superfamily. Heme (hemin) importer (TC 3.A.1.14.5) family. As to quaternary structure, the complex is composed of two ATP-binding proteins (HmuV), two transmembrane proteins (HmuU) and a solute-binding protein (HmuT).

It localises to the cell inner membrane. Part of the ABC transporter complex HmuTUV involved in hemin import. Responsible for energy coupling to the transport system. This chain is Hemin import ATP-binding protein HmuV, found in Pseudomonas entomophila (strain L48).